Here is a 1052-residue protein sequence, read N- to C-terminus: MASQPSSLKKKEEKGRNIQVVVRCRPFNLAERKANAHSVVECDHARKEVSVRTAGLTDKTSKKTYTFDMVFGASTKQIDVYRSVVCPILDEVIMGYNCTIFAYGQTGTGKTFTMEGERSPNEVYTWEEDPLAGIIPRTLHQIFEKLTDNGTEFSVKVSLLEIYNEELFDLLSPSSDVSERLQMFDDPRNKRGVIIKGLEEITVHNKDEVYQILEKGAAKRTTAATLMNAYSSRSHSVFSVTIHMKETTIDGEELVKIGKLNLVDLAGSENIGRSGAVDKRAREAGNINQSLLTLGRVITALVERTPHIPYRESKLTRILQDSLGGRTRTSIIATISPASFNLEETLSTLEYAHRAKNIMNKPEVNQKLTKKALIKEYTEEIERLKRDLAAAREKNGVYISEESFRAMNGKVTVQEEQIVELVEKIAVLEEELSKATELFMDSKNELDQCKSDLQTKTQELETTQKHLQETKLQLVKEEYVSSALERTEKTLHDTASKLLNTVKETTRAVSGLHSKLDRKRAIDEHNAEAQESFGKNLNSLFNNMEELIKDGSAKQKAMLDVHKTLFGNLMSSSVSALDTITTTALESLVSIPENVSARVSQISDMILEEQSLAAQSKSVLQGLIDELVTDLFTSLKTIVAPSVVSILNINKQLQHIFRASSTVAEKVEDQKREIDSFLSILCNNLHELRENTVSSLVESQKLCGDLTEDLKTIKETHSQELCQLSSSWAERFCALEKKYENIQKPLNSIQENTELRSTDIINKTTVHSKKILAESDGLLQELRHFNQEGTQLVEESVGHCSSLNSNLETVSQEITQKCGTLNTSTVHFSDQWASCLSKRKEELENLMEFVNGCCKASSSEITKKVREQSAAVANQHSSFVAQMTSDEESCKAGSLELDKTIKTGLTKLNCFLKQDLKLDIPTGMTPERKKYLYPTTLVRTEPREQLLDQLQKKQPPMMLNSSEASKETSQDMDEEREALEQCTEELVSPETTEHPSADCSSSRGLPFFQRKKPHGKDKENRGLNPVEKYKVEEASDLSISKSRLPLHTSINL.

The 342-residue stretch at 17 to 358 (NIQVVVRCRP…LEYAHRAKNI (342 aa)) folds into the Kinesin motor domain. Residue 104–111 (GQTGTGKT) participates in ATP binding. Residue K145 is modified to N6-acetyllysine. Positions 364 to 478 (VNQKLTKKAL…ETKLQLVKEE (115 aa)) form a coiled coil. At T457 the chain carries Phosphothreonine. A Glycyl lysine isopeptide (Lys-Gly) (interchain with G-Cter in SUMO2) cross-link involves residue K476. The residue at position 925 (T925) is a Phosphothreonine. Disordered regions lie at residues 950 to 1026 (LQKK…LNPV) and 1033 to 1052 (EASD…SINL). Residues 963-988 (EASKETSQDMDEEREALEQCTEELVS) are a coiled coil. A compositionally biased stretch (basic and acidic residues) spans 1016–1026 (KDKENRGLNPV).

The protein belongs to the TRAFAC class myosin-kinesin ATPase superfamily. Kinesin family. BimC subfamily. As to quaternary structure, interacts with the thyroid hormone receptor in the presence of thyroid hormone. Component of a large chromatin remodeling complex, at least composed of MYSM1, PCAF, RBM10 and KIF11/TRIP5. Interacts with RARRES1 and AGBL2. Phosphorylated exclusively on serine during S phase, but on both serine and Thr-925 during mitosis, so controlling the association of KIF11 with the spindle apparatus (probably during early prophase).

It is found in the cytoplasm. It localises to the cytoskeleton. The protein localises to the spindle pole. Its function is as follows. Motor protein required for establishing a bipolar spindle during mitosis. Required in non-mitotic cells for transport of secretory proteins from the Golgi complex to the cell surface. This Mus musculus (Mouse) protein is Kinesin-like protein KIF11 (Kif11).